Here is a 258-residue protein sequence, read N- to C-terminus: Alpha-fibrinogenase (258 aa).

Positions 1 to 18 are cleaved as a signal peptide; it reads MVLIRVLANLVMLHLSYG. A propeptide spanning residues 19-24 is cleaved from the precursor; the sequence is EKSSEL. The Peptidase S1 domain occupies 25 to 249; the sequence is VIGGRPCNIN…YNDWIQSIIA (225 aa). Disulfide bonds link cysteine 31-cysteine 163, cysteine 50-cysteine 66, cysteine 98-cysteine 256, cysteine 142-cysteine 210, cysteine 174-cysteine 189, and cysteine 200-cysteine 225. Asparagine 44 carries N-linked (GlcNAc...) asparagine glycosylation. The Charge relay system role is filled by histidine 65. Residues asparagine 79 and asparagine 101 are each glycosylated (N-linked (GlcNAc...) asparagine). Catalysis depends on aspartate 110, which acts as the Charge relay system. Serine 204 (charge relay system) is an active-site residue.

Belongs to the peptidase S1 family. Snake venom subfamily. As to quaternary structure, monomer. In terms of processing, glycosylated. Contains 8.5% of hexoses, 5.8% of hexosamines and 0.8% of sialic acids. As to expression, expressed by the venom gland.

It localises to the secreted. Inhibited by diisopropylfluorophosphate (DFP) and PMSF, and partially by soybean trypsin inhibitor, but not by EDTA. Functionally, degrades alpha chain of fibrinogen (FGA), and has strong caseinolytic activity. Cleaves oxidized insulin B-chain at '40-Tyr-|-Leu-41', '48-Phe-|-Phe-49' and '49-Phe-|-Tyr-50', and glucagon at the bonds '62-Tyr-|-Ser-63', 66-Leu-|-Asp-67' and '78-Leu-|-Met-79' bonds. This is Alpha-fibrinogenase from Macrovipera lebetinus (Levantine viper).